The sequence spans 303 residues: Glycine--tRNA ligase alpha subunit (303 aa).

It belongs to the class-II aminoacyl-tRNA synthetase family. In terms of assembly, tetramer of two alpha and two beta subunits.

Its subcellular location is the cytoplasm. It carries out the reaction tRNA(Gly) + glycine + ATP = glycyl-tRNA(Gly) + AMP + diphosphate. The chain is Glycine--tRNA ligase alpha subunit from Stenotrophomonas maltophilia (strain K279a).